The primary structure comprises 207 residues: ATP phosphoribosyltransferase (207 aa).

Belongs to the ATP phosphoribosyltransferase family. Short subfamily. In terms of assembly, heteromultimer composed of HisG and HisZ subunits.

It localises to the cytoplasm. The enzyme catalyses 1-(5-phospho-beta-D-ribosyl)-ATP + diphosphate = 5-phospho-alpha-D-ribose 1-diphosphate + ATP. The protein operates within amino-acid biosynthesis; L-histidine biosynthesis; L-histidine from 5-phospho-alpha-D-ribose 1-diphosphate: step 1/9. Catalyzes the condensation of ATP and 5-phosphoribose 1-diphosphate to form N'-(5'-phosphoribosyl)-ATP (PR-ATP). Has a crucial role in the pathway because the rate of histidine biosynthesis seems to be controlled primarily by regulation of HisG enzymatic activity. In Dictyoglomus thermophilum (strain ATCC 35947 / DSM 3960 / H-6-12), this protein is ATP phosphoribosyltransferase.